We begin with the raw amino-acid sequence, 293 residues long: PHD finger protein 11A (293 aa).

The segment at 25–61 (KRTCALCPEGHEWSQIYFSPSANIVAHENCLLYSSGL) adopts a C2HC pre-PHD-type zinc-finger fold. The PHD-type; degenerate zinc finger occupies 91–143 (LKCSFCKNKGATMGYDLQSCTKNYHLSCAMEDHAILQVDEDHGTYKLFCQKHA). Residues 262 to 293 (SSSTSGSLLPPEDHQVRCQESPEVQAGSGDSL) are disordered.

Its subcellular location is the nucleus. The polypeptide is PHD finger protein 11A (Phf11a) (Mus musculus (Mouse)).